The following is a 175-amino-acid chain: Ribulose bisphosphate carboxylase small subunit, chloroplastic 2 (175 aa).

A chloroplast-targeting transit peptide spans 1–46 (MAPTVMASSATSVAPFQGLKSTAGLPVSRRSTNSGFGNVSNGGRIK).

This sequence belongs to the RuBisCO small chain family. In terms of assembly, heterohexadecamer of 8 large and 8 small subunits.

Its subcellular location is the plastid. It localises to the chloroplast. RuBisCO catalyzes two reactions: the carboxylation of D-ribulose 1,5-bisphosphate, the primary event in carbon dioxide fixation, as well as the oxidative fragmentation of the pentose substrate. Both reactions occur simultaneously and in competition at the same active site. Although the small subunit is not catalytic it is essential for maximal activity. This is Ribulose bisphosphate carboxylase small subunit, chloroplastic 2 from Oryza sativa subsp. japonica (Rice).